We begin with the raw amino-acid sequence, 580 residues long: MASITGHCVAHFTDLSTRKSSFFSNSNNNSSLFRRKSTNIVTRKKYIFCSTSLSMNGCNGDPRAPVGTIETRTLPAVSTPALAMERLSSAVANLKSTLPSAQSGIIRLEVPIEEHIEALDWLHSQDQKNLLPRCYFSGRSQVTFSDFTSNDLTNRNGSAANGHLQRISTSSDDKNLVSVAGVGSAVLFRSPNPFSFDDWLSIKRFLSKNCPLIRAYGAIRFDARPHIAPEWKAFGSFYFVVPQVEFDELHGSSMIAATVAWDNALSLTYQQAIVALQTTMEQVSSTVSKLRQDVSHTSLVSKANIPDRTSWDLTLNRVLEEIGNKYSPLTKVVLARRSQVITTSDIDPLAWLSSFKADGKDAYQFCLQPHEAPAFIGNTPEQLFGRDQLTVFSEALAATRARGESDSLDLQMAHDLFSSPKDNHEFAIVRENIRQKLDAICTSVETEPMKSVRKLKRIQHLYARFAGRLRSEDDEFKILSSLHPTPAVCGFPMEDARKFIAENEMFDRGLYAGPVGFFGGAQSDFSVGIRSALIGKDAGALIYAGLGVVEGSDPALEWQELELKASQFMKLMKLEAPALK.

The transit peptide at 1–91 (MASITGHCVA…LAMERLSSAV (91 aa)) directs the protein to the chloroplast.

Belongs to the isochorismate synthase family. The cofactor is Mg(2+).

It localises to the plastid. Its subcellular location is the chloroplast. It catalyses the reaction chorismate = isochorismate. With respect to regulation, not inhibited by Tyr, Phe or Trp. In terms of biological role, involved in the synthesis of o-succinylbenzoic acid, 2,3-dihydroxybenzoic acid and salicylic acid (SA). The sequence is that of Isochorismate synthase, chloroplastic from Catharanthus roseus (Madagascar periwinkle).